The sequence spans 476 residues: RNA-binding protein 45 (476 aa).

The span at 1–14 (MDDAGGLGGSGGFR) shows a compositional bias: gly residues. The tract at residues 1-20 (MDDAGGLGGSGGFRPGVDSL) is disordered. 2 consecutive RRM domains span residues 26-106 (SRIF…IAQS) and 121-192 (TRIF…LAEP). K34 participates in a covalent cross-link: Glycyl lysine isopeptide (Lys-Gly) (interchain with G-Cter in SUMO2). Residues 192–212 (PKNKVSGSPEQDDYSSGRQEA) are disordered. A compositionally biased stretch (polar residues) spans 196 to 209 (VSGSPEQDDYSSGR). 2 positions are modified to phosphoserine: S199 and S464. The region spanning 392–464 (ERLFVVFNPH…VRLKVMLADS (73 aa)) is the RRM 3 domain.

It localises to the cytoplasm. Its subcellular location is the nucleus. RNA-binding protein with binding specificity for poly(C). May play an important role in neural development. In Mus musculus (Mouse), this protein is RNA-binding protein 45 (Rbm45).